Consider the following 573-residue polypeptide: Eukaryotic translation initiation factor 3 subunit D (573 aa).

Residues 111–162 (VFTRGGRGQRGARGTERGGRAQLSRGRGGQYGGGYDRGGRSAAGGRGGRRFG) form a disordered region. Over residues 136-156 (GRGGQYGGGYDRGGRSAAGGR) the composition is skewed to gly residues. Positions 301–315 (ALDMVTVNENAVDAP) are RNA gate. The segment at 552-573 (PAGGLDEEEDNGDLGQEEDDEE) is disordered. The span at 556 to 573 (LDEEEDNGDLGQEEDDEE) shows a compositional bias: acidic residues.

It belongs to the eIF-3 subunit D family. Component of the eukaryotic translation initiation factor 3 (eIF-3) complex.

It is found in the cytoplasm. In terms of biological role, mRNA cap-binding component of the eukaryotic translation initiation factor 3 (eIF-3) complex, which is involved in protein synthesis of a specialized repertoire of mRNAs and, together with other initiation factors, stimulates binding of mRNA and methionyl-tRNAi to the 40S ribosome. The eIF-3 complex specifically targets and initiates translation of a subset of mRNAs involved in cell proliferation. In the eIF-3 complex, eif3d specifically recognizes and binds the 7-methylguanosine cap of a subset of mRNAs. This chain is Eukaryotic translation initiation factor 3 subunit D, found in Pyricularia oryzae (strain 70-15 / ATCC MYA-4617 / FGSC 8958) (Rice blast fungus).